Consider the following 888-residue polypeptide: APGPDGLTGTKGSMGEPGTDGEPGSPGPQGAKGETGLAGRRGLTGIPGKQGRQGERGEPGTAGSQGQQGQPGTQGPPGLPGKQGETGEPGESGEDGTPGPRGERGAQGERGATGMMGPSGDPGEAGIPGADGKAGERGVPGAPGPVGTPGLPGMPGQQGPMGPIGAKGSKGDVGPTGERGYDGKDGEPGRDGSPGPIGQPGIPGEKGEDGVPGSDGTPGSRGDSGPRGLPGNPGPPGRPGALGPSGPPGPQGPRGPRGEPGMKGPAGPPGRPGATGALGQLGKTGLKGEPGNQGRRGPPGLQGDPGKPGQSGPPGPPGPSGPSGRDGSDGQKGSSGEPGRPGKDGIPGQPGSNGKDGEPGTPGSDGRAGEIGPSGPIGPKGERGTPGATGPMGNSGPPGVQGSKGEKGPPGTNGRNGSPGISGSRGAQGPPGAPGSSGQNGVDGGTGENGTNGRPGLKGESGAPGDPGASGSAGPAGPPGPKGDTGPPGIQGEKGRRGADGIPGKTGEPGPQGDQGPKGQKGEVGPVGEKGDKGWTGTPGDPGPQGDRGEPGPPGRDGVDGPPGPRGAPGEMGAVGDPGLNGSMGEPGNKGPDGDLGESGAKGPDGIKGPPGPPGPPGPPGQPGMSEIASYLSVGNLEKGPGFRLYSSSGEEMPKQKIKAENVLKDLDEKDKEMDSLIAPDGSRKFPAKTCYDLFLDHGNFESGEYWIDPNGGTVKDAIKVYCDKKKNSSCVYPTNPKISDLVLKSGFESKEDKWLSKAFKKSEEVEYDAHYTQINFLRTLSNYANQNVTYACRNSKAWEDGQHSIKLMGSNDMEYHASSKISLRPTVIMNECANGGKLDKWGKTVLEIDTRERSRLPIVDVSAFDVGREGQDFKLEIGPACFHHIKY.

The interval 1-627 (APGPDGLTGT…GPPGQPGMSE (627 aa)) is disordered. A Collagen-like 1 domain is found at 3-60 (GPDGLTGTKGSMGEPGTDGEPGSPGPQGAKGETGLAGRRGLTGIPGKQGRQGERGEPG). Composition is skewed to low complexity over residues 59–73 (PGTA…QPGT) and 148–164 (TPGL…MGPI). Residues 179–190 (RGYDGKDGEPGR) are compositionally biased toward basic and acidic residues. Residues 194-203 (PGPIGQPGIP) are compositionally biased toward low complexity. Pro residues predominate over residues 311–320 (SGPPGPPGPS). A compositionally biased stretch (low complexity) spans 422 to 440 (SGSRGAQGPPGAPGSSGQN). Over residues 441 to 450 (GVDGGTGENG) the composition is skewed to gly residues. Low complexity-rich tracts occupy residues 460–475 (ESGA…SAGP) and 508–518 (EPGPQGDQGPK). Residues 513 to 571 (GDQGPKGQKGEVGPVGEKGDKGWTGTPGDPGPQGDRGEPGPPGRDGVDGPPGPRGAPGE) form the Collagen-like 2 domain. Residues 610-622 (PPGPPGPPGPPGQ) show a composition bias toward pro residues. The region spanning 661-884 (ENVLKDLDEK…KLEIGPACFH (224 aa)) is the Fibrillar collagen NC1 domain. 2 cysteine pairs are disulfide-bonded: Cys-731–Cys-882 and Cys-793–Cys-833.

It belongs to the fibrillar collagen family. In terms of tissue distribution, component of the acid-insoluble organic matrix of the aragonitic skeleton (at protein level).

Its subcellular location is the secreted. The sequence is that of Collagen alpha chain from Acropora millepora (Staghorn coral).